The sequence spans 301 residues: Large ribosomal subunit protein uL18z (301 aa).

The protein belongs to the universal ribosomal protein uL18 family. Component of the large ribosomal subunit (LSU). Expressed in seedlings, roots, stems, leaves, inflorescences and siliques.

The protein resides in the cytoplasm. Its subcellular location is the nucleus. It localises to the nucleolus. It is found in the nucleoplasm. Component of the ribosome, a large ribonucleoprotein complex responsible for the synthesis of proteins in the cell. The small ribosomal subunit (SSU) binds messenger RNAs (mRNAs) and translates the encoded message by selecting cognate aminoacyl-transfer RNA (tRNA) molecules. The large subunit (LSU) contains the ribosomal catalytic site termed the peptidyl transferase center (PTC), which catalyzes the formation of peptide bonds, thereby polymerizing the amino acids delivered by tRNAs into a polypeptide chain. The nascent polypeptides leave the ribosome through a tunnel in the LSU and interact with protein factors that function in enzymatic processing, targeting, and the membrane insertion of nascent chains at the exit of the ribosomal tunnel. Seems involved in the regulation of cell proliferation. Essential in leaf polarity establishment, probably having a role for translation in leaf dorsoventral patterning to specify leaf adaxial identity. The polypeptide is Large ribosomal subunit protein uL18z (Arabidopsis thaliana (Mouse-ear cress)).